The following is a 178-amino-acid chain: Interleukin-10 (178 aa).

An N-terminal signal peptide occupies residues 1–18; that stretch reads MHSSALLCFLVFLAGVGA. Asn-29 carries N-linked (GlcNAc...) asparagine glycosylation. Cystine bridges form between Cys-30-Cys-126 and Cys-80-Cys-132. An N-linked (GlcNAc...) asparagine glycan is attached at Asn-134.

This sequence belongs to the IL-10 family. As to quaternary structure, homodimer. Interacts with IL10RA and IL10RB.

It localises to the secreted. In terms of biological role, major immune regulatory cytokine that acts on many cells of the immune system where it has profound anti-inflammatory functions, limiting excessive tissue disruption caused by inflammation. Mechanistically, IL10 binds to its heterotetrameric receptor comprising IL10RA and IL10RB leading to JAK1 and STAT2-mediated phosphorylation of STAT3. In turn, STAT3 translocates to the nucleus where it drives expression of anti-inflammatory mediators. Targets antigen-presenting cells (APCs) such as macrophages and monocytes and inhibits their release of pro-inflammatory cytokines including granulocyte-macrophage colony-stimulating factor /GM-CSF, granulocyte colony-stimulating factor/G-CSF, IL-1 alpha, IL-1 beta, IL-6, IL-8 and TNF-alpha. Also interferes with antigen presentation by reducing the expression of MHC-class II and co-stimulatory molecules, thereby inhibiting their ability to induce T cell activation. In addition, controls the inflammatory response of macrophages by reprogramming essential metabolic pathways including mTOR signaling. This chain is Interleukin-10 (IL10), found in Felis catus (Cat).